A 304-amino-acid chain; its full sequence is MAPPEAEVGAVMVMAPPTPGTPGTPGGPLITGMRVDSMSFDHRKPTPRCKCLPVMGSTWGQHDTCFTDFPSPDVSLTRKLGAEFVGTFILIFTATAGPIVNQKYDGAETLIGNAACAGLAVMIIILSTGHISGAHLNPSLTIAFAALRHFPWAHVPAYIAAQVSASICASFALKGVFHPFMSGGVTIPSVSLGQAFALEFIITFILLFVVTAVATDTRAVGELAGIAVGATVMLNILVAGPSTGGSMNPVRTLGPAVASGNYRSLWVYLVAPTLGAISGAAVYTGVKLNDSVTDPPRPVRSFRR.

The next 2 membrane-spanning stretches (helical) occupy residues 80–100 (LGAE…GPIV) and 106–126 (GAET…IIIL). The short motif at 137-139 (NPS) is the NPA 1 element. Transmembrane regions (helical) follow at residues 157-177 (AYIA…KGVF), 195-215 (AFAL…AVAT), and 219-239 (AVGE…ILVA). The NPA 2 signature appears at 248-250 (NPV). Residues 266 to 286 (WVYLVAPTLGAISGAAVYTGV) traverse the membrane as a helical segment. Residue Ser-301 is modified to Phosphoserine.

It belongs to the MIP/aquaporin (TC 1.A.8) family. NIP (TC 1.A.8.12) subfamily. In terms of tissue distribution, expressed in rosette leaves.

Its subcellular location is the cell membrane. Functionally, boric acid transporter. Low water transport activity. Plays an important role as plasma membrane boric acid channel for the boron uptake required for plant growth and development under boron limitation. The protein is Probable aquaporin NIP5-1 (NIP5-1) of Arabidopsis thaliana (Mouse-ear cress).